The following is a 575-amino-acid chain: Protein NRD1 (575 aa).

In terms of domain architecture, CID spans 1 to 153; sequence MQQDDDFQNF…AIRSKCFAMD (153 aa). The disordered stretch occupies residues 225 to 282; the sequence is SHTSVGTVAPPQAHTITEYGSRRERERERERYNSRRNRSRSPPAPFSQPSTGRKDRYP. Over residues 244–257 the composition is skewed to basic and acidic residues; sequence GSRRERERERERYN. Phosphoserine occurs at positions 263, 265, and 271. The region spanning 339–409 is the RRM domain; it reads RTLFIGGVPL…LPLRTRWGVG (71 aa). A disordered region spans residues 468 to 575; it reads VSSKAISQKM…NQQQQQQQQS (108 aa). Composition is skewed to polar residues over residues 471 to 482 and 491 to 501; these read KAISQKMPTDSG and PNKSGSISSIS. 2 stretches are compositionally biased toward low complexity: residues 517 to 527 and 549 to 575; these read QYVQPMMQQPY and QQQF…QQQS.

The protein localises to the nucleus. Plays a role in sequence-specific regulation of nuclear pre-mRNA abundance. In Saccharomyces cerevisiae (strain ATCC 204508 / S288c) (Baker's yeast), this protein is Protein NRD1 (NRD1).